A 524-amino-acid chain; its full sequence is Peptide chain release factor 3 (524 aa).

The 268-residue stretch at 11-278 (AKRRTFAIIS…SFVQYAPEPG (268 aa)) folds into the tr-type G domain. Residues 20–27 (SHPDAGKT), 88–92 (DTPGH), and 142–145 (NKLD) contribute to the GTP site.

The protein belongs to the TRAFAC class translation factor GTPase superfamily. Classic translation factor GTPase family. PrfC subfamily.

The protein resides in the cytoplasm. Functionally, increases the formation of ribosomal termination complexes and stimulates activities of RF-1 and RF-2. It binds guanine nucleotides and has strong preference for UGA stop codons. It may interact directly with the ribosome. The stimulation of RF-1 and RF-2 is significantly reduced by GTP and GDP, but not by GMP. This chain is Peptide chain release factor 3, found in Lacticaseibacillus paracasei (strain ATCC 334 / BCRC 17002 / CCUG 31169 / CIP 107868 / KCTC 3260 / NRRL B-441) (Lactobacillus paracasei).